Consider the following 571-residue polypeptide: Pectinesterase/pectinesterase inhibitor (571 aa).

The pectinesterase inhibitor stretch occupies residues 27 to 178 (NSHQKAVESL…KILSSNAIDI (152 aa)). The disordered stretch occupies residues 233–254 (AQAGRPGAPADEGIGEGGGGGG). The interval 259–558 (THVVAKDGSG…TVANWLTPAN (300 aa)) is pectinesterase. The substrate site is built by T336 and Q366. D389 serves as the catalytic Proton donor; for pectinesterase activity. D410 acts as the Nucleophile; for pectinesterase activity in catalysis. Substrate is bound by residues R479 and W481.

This sequence in the N-terminal section; belongs to the PMEI family. The protein in the C-terminal section; belongs to the pectinesterase family.

It is found in the secreted. Its subcellular location is the cell wall. It carries out the reaction [(1-&gt;4)-alpha-D-galacturonosyl methyl ester](n) + n H2O = [(1-&gt;4)-alpha-D-galacturonosyl](n) + n methanol + n H(+). The protein operates within glycan metabolism; pectin degradation; 2-dehydro-3-deoxy-D-gluconate from pectin: step 1/5. Its function is as follows. Acts in the modification of cell walls via demethylesterification of cell wall pectin. The protein is Pectinesterase/pectinesterase inhibitor of Brassica campestris (Field mustard).